The following is a 166-amino-acid chain: UPF0254 protein Maeo_0668 (166 aa).

The protein belongs to the UPF0254 family.

In Methanococcus aeolicus (strain ATCC BAA-1280 / DSM 17508 / OCM 812 / Nankai-3), this protein is UPF0254 protein Maeo_0668.